Reading from the N-terminus, the 102-residue chain is ATP-dependent Clp protease adapter protein ClpS (102 aa).

The protein belongs to the ClpS family. Binds to the N-terminal domain of the chaperone ClpA.

Functionally, involved in the modulation of the specificity of the ClpAP-mediated ATP-dependent protein degradation. This chain is ATP-dependent Clp protease adapter protein ClpS, found in Shewanella baltica (strain OS155 / ATCC BAA-1091).